The primary structure comprises 312 residues: Nucleosome assembly protein 1-like 4 (312 aa).

Residues 24-78 adopt a coiled-coil conformation; that stretch reads VETLKNKLQALAEQHVDVLESLAPSVRKRVDVLMEIQSQHDELEVKFFEEKAALE. The Nuclear export signal signature appears at 45 to 60; that stretch reads LAPSVRKRVDVLMEIQ. The segment at 288–312 is disordered; sequence EDYGASWVDDEEEDDNDDEYSDEEA.

This sequence belongs to the nucleosome assembly protein (NAP) family.

It localises to the nucleus. The protein resides in the cytoplasm. Its function is as follows. May modulate chromatin structure by regulation of nucleosome assembly/disassembly. This is Nucleosome assembly protein 1-like 4 from Oryza sativa subsp. indica (Rice).